Reading from the N-terminus, the 395-residue chain is Phosphoglycerate kinase (395 aa).

Substrate contacts are provided by residues Asp-21 to Asn-23, Arg-36, His-59 to Arg-62, Arg-113, and Arg-146. ATP is bound by residues Lys-197, Glu-324, and Gly-350–Thr-353.

Belongs to the phosphoglycerate kinase family. In terms of assembly, monomer.

The protein localises to the cytoplasm. It catalyses the reaction (2R)-3-phosphoglycerate + ATP = (2R)-3-phospho-glyceroyl phosphate + ADP. It participates in carbohydrate degradation; glycolysis; pyruvate from D-glyceraldehyde 3-phosphate: step 2/5. This chain is Phosphoglycerate kinase, found in Acinetobacter baumannii (strain ACICU).